The sequence spans 239 residues: Ribonuclease 3 (239 aa).

The RNase III domain occupies 18-141 (YLTLEKALGY…LMAGVYLEAG (124 aa)). Glutamate 54 serves as a coordination point for Mg(2+). Aspartate 58 is an active-site residue. The Mg(2+) site is built by serine 127 and glutamate 130. Glutamate 130 is a catalytic residue. The 70-residue stretch at 168–237 (DYKTALQELT…AYQALQKLKE (70 aa)) folds into the DRBM domain.

Belongs to the ribonuclease III family. Homodimer. Mg(2+) serves as cofactor.

It localises to the cytoplasm. The enzyme catalyses Endonucleolytic cleavage to 5'-phosphomonoester.. Digests double-stranded RNA. Involved in the processing of primary rRNA transcript to yield the immediate precursors to the large and small rRNAs (23S and 16S). Processes some mRNAs, and tRNAs when they are encoded in the rRNA operon. Processes pre-crRNA and tracrRNA of type II CRISPR loci if present in the organism. The chain is Ribonuclease 3 from Helicobacter pylori (strain P12).